A 194-amino-acid chain; its full sequence is Probable nicotinate-nucleotide adenylyltransferase (194 aa).

The protein belongs to the NadD family.

It catalyses the reaction nicotinate beta-D-ribonucleotide + ATP + H(+) = deamido-NAD(+) + diphosphate. Its pathway is cofactor biosynthesis; NAD(+) biosynthesis; deamido-NAD(+) from nicotinate D-ribonucleotide: step 1/1. Its function is as follows. Catalyzes the reversible adenylation of nicotinate mononucleotide (NaMN) to nicotinic acid adenine dinucleotide (NaAD). This Chlorobium luteolum (strain DSM 273 / BCRC 81028 / 2530) (Pelodictyon luteolum) protein is Probable nicotinate-nucleotide adenylyltransferase.